The following is a 412-amino-acid chain: MEPHRVLVLNSGSSSVKYQLLDMRDRSRLASGLVERIGEETSRLAHTPSAGGGAEPRERTGRIPDHDAALKAAAEELAADGLGLDSPELAAIGHRVVHGGLRFSAPTVITDEVLEEIERLVPVAPLHNPANITGIVTARALRPDLPQVAVFDTAFHTTMPEAAARYAIDVETADAHRIRRYGFHGTSHAYVSRKTAELLGRAPEDVNVIVLHLGNGASASAVAGGRCVDTSMGLTPLEGLVMGTRSGDIDPAVTFHLKRVAGMSADEIDVLLNQRSGLVGLCGDNDMRVIRRRIDEGDERAALAFDIYIHRLKKYIGAYTAVLGRVDAVAFTAGVGENAAPVREAAVAGLEELGMAVDASLNAVRSTEPRLISPEYARVAVAVVPTDEELEIAEQTFALVGDRGPRFGQVDN.

Asn10 provides a ligand contact to Mg(2+). An ATP-binding site is contributed by Lys17. Positions 40–61 (ETSRLAHTPSAGGGAEPRERTG) are disordered. Arg95 serves as a coordination point for substrate. The active-site Proton donor/acceptor is the Asp152. Residues 212–216 (HLGNG), 286–288 (DMR), and 334–338 (GVGEN) each bind ATP. Mg(2+) is bound at residue Glu388.

The protein belongs to the acetokinase family. As to quaternary structure, homodimer. It depends on Mg(2+) as a cofactor. Mn(2+) serves as cofactor.

The protein resides in the cytoplasm. The catalysed reaction is acetate + ATP = acetyl phosphate + ADP. The protein operates within metabolic intermediate biosynthesis; acetyl-CoA biosynthesis; acetyl-CoA from acetate: step 1/2. Catalyzes the formation of acetyl phosphate from acetate and ATP. Can also catalyze the reverse reaction. This Streptomyces griseus subsp. griseus (strain JCM 4626 / CBS 651.72 / NBRC 13350 / KCC S-0626 / ISP 5235) protein is Acetate kinase.